The chain runs to 121 residues: MSTKLPIVISNGTAFKKVPVQLLLNSGSEAQHGLPRNADSQPARPRTGITRTCGQCGEIKTSLQWREGPNGAACLCNACGLFFRKLILRFGRAAAKRYMEQIKGTGTKRRIPKELTGTVRF.

Residues 29-48 (EAQHGLPRNADSQPARPRTG) are disordered. A GATA-type zinc finger spans residues 53 to 79 (CGQCGEIKTSLQWREGPNGAACLCNAC).

This is Protein GAT4 (GAT4) from Saccharomyces cerevisiae (strain ATCC 204508 / S288c) (Baker's yeast).